We begin with the raw amino-acid sequence, 718 residues long: Catalase (718 aa).

Residues histidine 103 and asparagine 176 contribute to the active site. Tyrosine 390 is a binding site for heme.

Belongs to the catalase family. Heme serves as cofactor.

It localises to the peroxisome matrix. It carries out the reaction 2 H2O2 = O2 + 2 H2O. Its function is as follows. Catalyzes the degradation of hydrogen peroxide (H(2)O(2)) generated by peroxisomal oxidases to water and oxygen, thereby protecting cells from the toxic effects of hydrogen peroxide. The sequence is that of Catalase (CAT1) from Blumeria hordei (Barley powdery mildew).